Here is a 148-residue protein sequence, read N- to C-terminus: MSMVKEFKEFALKGNVMDLAVGVIIGGAFSTIVNSIVKDLIMPVVGLATGGLDFSNKFIRLGAIPPSFKGSPESYKDLQTAGVAVFGYGSFITVLINFLILAFIIFLMVKFINNLRKPAEAAPAEPPPTPEDVLLLREIRDSLKNSPR.

A run of 2 helical transmembrane segments spans residues 16–36 (VMDL…VNSI) and 89–109 (GSFI…FLMV).

The protein belongs to the MscL family. In terms of assembly, homopentamer.

It localises to the cell inner membrane. In terms of biological role, channel that opens in response to stretch forces in the membrane lipid bilayer. May participate in the regulation of osmotic pressure changes within the cell. The sequence is that of Large-conductance mechanosensitive channel from Paraburkholderia xenovorans (strain LB400).